The following is a 311-amino-acid chain: Methionyl-tRNA formyltransferase (311 aa).

(6S)-5,6,7,8-tetrahydrofolate is bound at residue 110–113 (SLLP).

The protein belongs to the Fmt family.

The catalysed reaction is L-methionyl-tRNA(fMet) + (6R)-10-formyltetrahydrofolate = N-formyl-L-methionyl-tRNA(fMet) + (6S)-5,6,7,8-tetrahydrofolate + H(+). Attaches a formyl group to the free amino group of methionyl-tRNA(fMet). The formyl group appears to play a dual role in the initiator identity of N-formylmethionyl-tRNA by promoting its recognition by IF2 and preventing the misappropriation of this tRNA by the elongation apparatus. The chain is Methionyl-tRNA formyltransferase from Streptococcus agalactiae serotype Ia (strain ATCC 27591 / A909 / CDC SS700).